The primary structure comprises 851 residues: DEAD-box ATP-dependent RNA helicase 29 (851 aa).

The tract at residues 1 to 49 (MARLNPSKPSSRGGKPRSSSADAMAEHKPPPGRPKREGEGASKKKAKSG) is disordered. Positions 7–20 (SKPSSRGGKPRSSS) are enriched in low complexity. Residues 24–42 (MAEHKPPPGRPKREGEGAS) show a composition bias toward basic and acidic residues. The Q motif signature appears at 49-77 (GGFESMGLCEEVYRGVRHKGYRVPTPIQR). The Helicase ATP-binding domain maps to 80-253 (MPLILAGHDI…KAGLRDPQIV (174 aa)). 93–100 (ARTGSGKT) is an ATP binding site. A DEAD box motif is present at residues 201-204 (DEAD). One can recognise a Helicase C-terminal domain in the interval 277 to 426 (KLAALLYLVR…PAPTEEELLK (150 aa)). A disordered region spans residues 702–851 (KWQQKTHRSI…KGKMKGKGTR (150 aa)). Positions 733 to 746 (RGNRKHTAAGRGRR) are enriched in basic residues. Basic and acidic residues-rich tracts occupy residues 773–787 (DIAR…ESKF) and 796–825 (RHDG…DGNG). Over residues 841-851 (GKGKMKGKGTR) the composition is skewed to basic residues.

This sequence belongs to the DEAD box helicase family. DDX54/DBP10 subfamily.

The enzyme catalyses ATP + H2O = ADP + phosphate + H(+). The polypeptide is DEAD-box ATP-dependent RNA helicase 29 (Oryza sativa subsp. indica (Rice)).